The chain runs to 143 residues: Transcriptional regulator MraZ (143 aa).

SpoVT-AbrB domains are found at residues 5 to 47 and 76 to 119; these read EYLH…PLDE and ATEC…SQAL.

Belongs to the MraZ family. As to quaternary structure, forms oligomers.

The protein localises to the cytoplasm. It localises to the nucleoid. This is Transcriptional regulator MraZ from Desulfitobacterium hafniense (strain Y51).